The following is a 702-amino-acid chain: Phosphoribosylformylglycinamidine synthase subunit PurL (702 aa).

Residue histidine 36 is part of the active site. Positions 39 and 80 each coordinate ATP. Glutamate 82 contributes to the Mg(2+) binding site. Substrate-binding positions include 83-86 and arginine 105; that span reads SHNH. Histidine 84 (proton acceptor) is an active-site residue. Residue aspartate 106 participates in Mg(2+) binding. Residue glutamine 225 participates in substrate binding. Aspartate 251 provides a ligand contact to Mg(2+). 293 to 295 contacts substrate; sequence ETQ. ATP is bound by residues aspartate 468 and glycine 505. Serine 508 is a binding site for substrate.

This sequence belongs to the FGAMS family. Monomer. Part of the FGAM synthase complex composed of 1 PurL, 1 PurQ and 2 PurS subunits.

The protein resides in the cytoplasm. It carries out the reaction N(2)-formyl-N(1)-(5-phospho-beta-D-ribosyl)glycinamide + L-glutamine + ATP + H2O = 2-formamido-N(1)-(5-O-phospho-beta-D-ribosyl)acetamidine + L-glutamate + ADP + phosphate + H(+). It functions in the pathway purine metabolism; IMP biosynthesis via de novo pathway; 5-amino-1-(5-phospho-D-ribosyl)imidazole from N(2)-formyl-N(1)-(5-phospho-D-ribosyl)glycinamide: step 1/2. In terms of biological role, part of the phosphoribosylformylglycinamidine synthase complex involved in the purines biosynthetic pathway. Catalyzes the ATP-dependent conversion of formylglycinamide ribonucleotide (FGAR) and glutamine to yield formylglycinamidine ribonucleotide (FGAM) and glutamate. The FGAM synthase complex is composed of three subunits. PurQ produces an ammonia molecule by converting glutamine to glutamate. PurL transfers the ammonia molecule to FGAR to form FGAM in an ATP-dependent manner. PurS interacts with PurQ and PurL and is thought to assist in the transfer of the ammonia molecule from PurQ to PurL. The polypeptide is Phosphoribosylformylglycinamidine synthase subunit PurL (Metallosphaera sedula (strain ATCC 51363 / DSM 5348 / JCM 9185 / NBRC 15509 / TH2)).